A 432-amino-acid polypeptide reads, in one-letter code: MRKNKVDIITLGCSKNLVDSEQLMRQFVANGYTVEHDPHKINGEIVVVNTCGFIGDAQEESINMILELGEQKQKGRIGKLFVMGCLSERFLKDLEKELPEVDRFYGKFNWKELISDLGKSYHQELATDRVLTTPRHYAYVKIGEGCNRTCSYCSIPIITGAYQSRPMDEIVDEVRGLVAQGVKEFQMIAQDLTFYGLDRYKRMALPELVERVSDIPGVEWIRLHYGYPSHFPYDLLPVMRERDNVCKYMDIALQHISDPMLKMMRRNITKAETYELLERMRREVPGIHLRTTLMVGHPGETEQDFEELIRFVKDIRFERMGAFAYSHEEGTYAYQHYKDEIPQEVKQDRLDYLMRVQEGISADVNASKVGQTFRVIVDREEEDFYVGRTQYDSPEVDPEILISKDTPLSPGSFYQVKVIDAQAFDLYGKVLN.

The region spanning 4 to 122 is the MTTase N-terminal domain; that stretch reads NKVDIITLGC…LISDLGKSYH (119 aa). Residues cysteine 13, cysteine 51, cysteine 85, cysteine 146, cysteine 150, and cysteine 153 each contribute to the [4Fe-4S] cluster site. Positions 132–363 constitute a Radical SAM core domain; sequence TTPRHYAYVK…MRVQEGISAD (232 aa). The TRAM domain maps to 366 to 432; the sequence is ASKVGQTFRV…AFDLYGKVLN (67 aa).

It belongs to the methylthiotransferase family. RimO subfamily. [4Fe-4S] cluster serves as cofactor.

It is found in the cytoplasm. The catalysed reaction is L-aspartate(89)-[ribosomal protein uS12]-hydrogen + (sulfur carrier)-SH + AH2 + 2 S-adenosyl-L-methionine = 3-methylsulfanyl-L-aspartate(89)-[ribosomal protein uS12]-hydrogen + (sulfur carrier)-H + 5'-deoxyadenosine + L-methionine + A + S-adenosyl-L-homocysteine + 2 H(+). In terms of biological role, catalyzes the methylthiolation of an aspartic acid residue of ribosomal protein uS12. The protein is Ribosomal protein uS12 methylthiotransferase RimO of Parabacteroides distasonis (strain ATCC 8503 / DSM 20701 / CIP 104284 / JCM 5825 / NCTC 11152).